Here is a 190-residue protein sequence, read N- to C-terminus: Putative manganese efflux pump MntP (190 aa).

Helical transmembrane passes span 3–23, 41–61, 69–89, 105–125, 133–153, and 168–188; these read PISLLFLALAMSTDAFAAALG, LIFGAIETITPVIGWGIGQVA, DHWIAFTLLLVLGLHMIYNGI, FWILAVTAFATSIDALAVGVG, IVVAALAIGLATTVMVTIGVM, and IIGGIVLIVVGATILYEHLSA.

This sequence belongs to the MntP (TC 9.B.29) family.

It localises to the cell inner membrane. Functionally, probably functions as a manganese efflux pump. In Pseudomonas syringae pv. syringae (strain B728a), this protein is Putative manganese efflux pump MntP.